Here is a 101-residue protein sequence, read N- to C-terminus: Small ribosomal subunit protein uS14 (101 aa).

Belongs to the universal ribosomal protein uS14 family. Part of the 30S ribosomal subunit. Contacts proteins S3 and S10.

Functionally, binds 16S rRNA, required for the assembly of 30S particles and may also be responsible for determining the conformation of the 16S rRNA at the A site. This is Small ribosomal subunit protein uS14 from Bordetella parapertussis (strain 12822 / ATCC BAA-587 / NCTC 13253).